The following is a 323-amino-acid chain: Glucokinase (323 aa).

G8–T13 lines the ATP pocket.

The protein belongs to the bacterial glucokinase family.

The protein resides in the cytoplasm. The catalysed reaction is D-glucose + ATP = D-glucose 6-phosphate + ADP + H(+). The chain is Glucokinase from Yersinia pseudotuberculosis serotype I (strain IP32953).